The sequence spans 661 residues: Ubiquitin-associated and SH3 domain-containing protein A (661 aa).

A UBA domain is found at 15 to 60 (KLKSRSSPSLLEPLLAMGFPVHTALKALAATGRKTAEEALAWLHDH). One can recognise an SH3 domain in the interval 276–341 (VHYQTLRALF…PENYTDRASE (66 aa)). The segment at 395-661 (RKSVLVVRHG…FNWRNWISGN (267 aa)) is phosphatase-like.

As to quaternary structure, homodimer or homooligomer. Interacts with CBL. Part of a complex containing CBL and activated EGFR. Interacts with ubiquitin and with mono-ubiquitinated proteins. Interacts with dynamin. As to expression, highest expression of UBASH3A in tissues belonging to the immune system, including spleen, peripheral blood leukocytes, thymus and bone marrow.

It is found in the cytoplasm. Its subcellular location is the nucleus. In terms of biological role, interferes with CBL-mediated down-regulation and degradation of receptor-type tyrosine kinases. Promotes accumulation of activated target receptors, such as T-cell receptors, EGFR and PDGFRB, on the cell surface. Exhibits negligible protein tyrosine phosphatase activity at neutral pH. May act as a dominant-negative regulator of UBASH3B-dependent dephosphorylation. May inhibit dynamin-dependent endocytic pathways by functionally sequestering dynamin via its SH3 domain. The chain is Ubiquitin-associated and SH3 domain-containing protein A (UBASH3A) from Homo sapiens (Human).